The sequence spans 64 residues: DNA gyrase inhibitor YacG (64 aa).

Residues cysteine 7, cysteine 10, cysteine 26, and cysteine 30 each contribute to the Zn(2+) site. The tract at residues 44-64 is disordered; the sequence is RIPGEIDPELLPYPEEGEQWQ.

The protein belongs to the DNA gyrase inhibitor YacG family. As to quaternary structure, interacts with GyrB. Zn(2+) serves as cofactor.

In terms of biological role, inhibits all the catalytic activities of DNA gyrase by preventing its interaction with DNA. Acts by binding directly to the C-terminal domain of GyrB, which probably disrupts DNA binding by the gyrase. This Aeromonas hydrophila subsp. hydrophila (strain ATCC 7966 / DSM 30187 / BCRC 13018 / CCUG 14551 / JCM 1027 / KCTC 2358 / NCIMB 9240 / NCTC 8049) protein is DNA gyrase inhibitor YacG.